The chain runs to 505 residues: Serine carboxypeptidase-like 47 (505 aa).

The first 22 residues, 1–22 (MEAKTFFLFMLFIFSQSWLSTS), serve as a signal peptide directing secretion. 3 N-linked (GlcNAc...) asparagine glycosylation sites follow: N37, N86, and N122. 3 disulfides stabilise this stretch: C138–C378, C306–C321, and C344–C349. S228 is a catalytic residue. N301 carries N-linked (GlcNAc...) asparagine glycosylation. Residue D416 is part of the active site. N-linked (GlcNAc...) asparagine glycosylation is found at N432 and N444. H473 is an active-site residue.

Belongs to the peptidase S10 family. Expressed in roots, flowers and siliques.

The protein resides in the secreted. Functionally, probable carboxypeptidase. In Arabidopsis thaliana (Mouse-ear cress), this protein is Serine carboxypeptidase-like 47 (SCPL47).